Consider the following 132-residue polypeptide: C-glycoside deglycosidase beta subunit (132 aa).

This sequence belongs to the C-glycoside deglycosidase beta subunit family. In terms of assembly, heterodimer composed of an alpha subunit (CarB2) and a beta subunit (CarC2). Requires a divalent metal cation as cofactor.

It carries out the reaction 3''-dehydroorientin = 1,5-anhydro-D-erythro-hex-1-en-3-ulose + luteolin. Activity is strongly reduced in the presence of chelating agents. Its function is as follows. Carbon-carbon bond-cleaving enzyme which participates in the metabolism of C-glycosides. Acts on the C8-glycosylated compound 3''-dehydroorientin (3''-oxo-orientin). The sequence is that of C-glycoside deglycosidase beta subunit from Arthrobacter globiformis (strain ATCC 8010 / DSM 20124 / JCM 1332 / NBRC 12137 / NCIMB 8907 / NRRL B-2979 / 168).